The chain runs to 374 residues: Coiled-coil domain-containing protein 89 (374 aa).

Residues 1-40 (MRAPMLQKQQAPRMDTPPPEERLEKQNEKLNNQEEETEFK) are disordered. Residue Thr-16 is modified to Phosphothreonine. Positions 19-32 (PEERLEKQNEKLNN) are enriched in basic and acidic residues. Residues 20–351 (EERLEKQNEK…DELRLQSEAF (332 aa)) adopt a coiled-coil conformation.

The protein belongs to the CCDC89 family. Interacts with HEY1.

It localises to the cytoplasm. Its subcellular location is the nucleus. The sequence is that of Coiled-coil domain-containing protein 89 (CCDC89) from Homo sapiens (Human).